The chain runs to 211 residues: LexA repressor (211 aa).

The segment at residues Arg-30 to Lys-50 is a DNA-binding region (H-T-H motif). Catalysis depends on for autocatalytic cleavage activity residues Ser-128 and Lys-165.

Belongs to the peptidase S24 family. Homodimer.

The enzyme catalyses Hydrolysis of Ala-|-Gly bond in repressor LexA.. Represses a number of genes involved in the response to DNA damage (SOS response), including recA and lexA. In the presence of single-stranded DNA, RecA interacts with LexA causing an autocatalytic cleavage which disrupts the DNA-binding part of LexA, leading to derepression of the SOS regulon and eventually DNA repair. In Haemophilus ducreyi (strain 35000HP / ATCC 700724), this protein is LexA repressor.